The sequence spans 166 residues: Small ribosomal subunit protein uS9 (166 aa).

Residues 135–166 are disordered; sequence KKAGFLTRDPRATERKKYGLKKARKAPQYSKR. The span at 142–151 shows a compositional bias: basic and acidic residues; that stretch reads RDPRATERKK. Over residues 152-166 the composition is skewed to basic residues; it reads YGLKKARKAPQYSKR.

It belongs to the universal ribosomal protein uS9 family.

In Mycolicibacterium paratuberculosis (strain ATCC BAA-968 / K-10) (Mycobacterium paratuberculosis), this protein is Small ribosomal subunit protein uS9.